A 223-amino-acid polypeptide reads, in one-letter code: dITP/XTP pyrophosphatase (223 aa).

9–14 (TTNQNK) is a binding site for substrate. The active-site Proton acceptor is the aspartate 71. Aspartate 71 contacts Mg(2+). Residues serine 72, 152-155 (FGYD), lysine 175, and 180-181 (HR) each bind substrate. A disordered region spans residues 203 to 223 (LSEEKPAKPDHSEFEGNDWSK).

This sequence belongs to the HAM1 NTPase family. In terms of assembly, homodimer. Mg(2+) serves as cofactor.

The catalysed reaction is XTP + H2O = XMP + diphosphate + H(+). It carries out the reaction dITP + H2O = dIMP + diphosphate + H(+). It catalyses the reaction ITP + H2O = IMP + diphosphate + H(+). Its function is as follows. Pyrophosphatase that catalyzes the hydrolysis of nucleoside triphosphates to their monophosphate derivatives, with a high preference for the non-canonical purine nucleotides XTP (xanthosine triphosphate), dITP (deoxyinosine triphosphate) and ITP. Seems to function as a house-cleaning enzyme that removes non-canonical purine nucleotides from the nucleotide pool, thus preventing their incorporation into DNA/RNA and avoiding chromosomal lesions. The chain is dITP/XTP pyrophosphatase from Desulfotalea psychrophila (strain LSv54 / DSM 12343).